The following is a 41-amino-acid chain: Large ribosomal subunit protein bL36 (41 aa).

It belongs to the bacterial ribosomal protein bL36 family.

The protein is Large ribosomal subunit protein bL36 of Jannaschia sp. (strain CCS1).